The primary structure comprises 383 residues: 1-deoxy-D-xylulose 5-phosphate reductoisomerase (383 aa).

Positions 10, 11, 12, 13, 38, and 121 each coordinate NADPH. Lys-122 is a 1-deoxy-D-xylulose 5-phosphate binding site. Glu-123 contributes to the NADPH binding site. Residue Asp-147 coordinates Mn(2+). Residues Ser-148, Glu-149, Ser-172, and His-195 each contribute to the 1-deoxy-D-xylulose 5-phosphate site. Position 149 (Glu-149) interacts with Mn(2+). Gly-201 contributes to the NADPH binding site. The 1-deoxy-D-xylulose 5-phosphate site is built by Ser-208, Asn-213, Lys-214, and Glu-217. A Mn(2+)-binding site is contributed by Glu-217.

Belongs to the DXR family. It depends on Mg(2+) as a cofactor. The cofactor is Mn(2+).

The catalysed reaction is 2-C-methyl-D-erythritol 4-phosphate + NADP(+) = 1-deoxy-D-xylulose 5-phosphate + NADPH + H(+). The protein operates within isoprenoid biosynthesis; isopentenyl diphosphate biosynthesis via DXP pathway; isopentenyl diphosphate from 1-deoxy-D-xylulose 5-phosphate: step 1/6. In terms of biological role, catalyzes the NADPH-dependent rearrangement and reduction of 1-deoxy-D-xylulose-5-phosphate (DXP) to 2-C-methyl-D-erythritol 4-phosphate (MEP). This is 1-deoxy-D-xylulose 5-phosphate reductoisomerase from Vesicomyosocius okutanii subsp. Calyptogena okutanii (strain HA).